The following is a 310-amino-acid chain: GPN-loop GTPase 2 (310 aa).

Ala-2 is modified (N-acetylalanine). Position 19-24 (19-24) interacts with GTP; that stretch reads GSGKTT. Residues 76-78 carry the Gly-Pro-Asn (GPN)-loop; involved in dimer interface motif; that stretch reads GPN. 178 to 181 lines the GTP pocket; sequence SKMD.

It belongs to the GPN-loop GTPase family. Heterodimers with GPN1 or GPN3. Binds to RNA polymerase II (RNAPII).

Functionally, small GTPase required for proper localization of RNA polymerase II and III (RNAPII and RNAPIII). May act at an RNAP assembly step prior to nuclear import. The chain is GPN-loop GTPase 2 from Homo sapiens (Human).